The chain runs to 178 residues: Protein GrpE (178 aa).

The protein belongs to the GrpE family. As to quaternary structure, homodimer.

It localises to the cytoplasm. Functionally, participates actively in the response to hyperosmotic and heat shock by preventing the aggregation of stress-denatured proteins, in association with DnaK and GrpE. It is the nucleotide exchange factor for DnaK and may function as a thermosensor. Unfolded proteins bind initially to DnaJ; upon interaction with the DnaJ-bound protein, DnaK hydrolyzes its bound ATP, resulting in the formation of a stable complex. GrpE releases ADP from DnaK; ATP binding to DnaK triggers the release of the substrate protein, thus completing the reaction cycle. Several rounds of ATP-dependent interactions between DnaJ, DnaK and GrpE are required for fully efficient folding. The protein is Protein GrpE of Rickettsia prowazekii (strain Madrid E).